Here is a 592-residue protein sequence, read N- to C-terminus: Neurogenic locus notch homolog protein (592 aa).

The signal sequence occupies residues 1-19; that stretch reads MIFVLTLVALCTAIHCPDG. EGF-like domains are found at residues 64–104, 106–146, 267–307, 353–387, 453–488, and 546–588; these read YPSI…DYQV, VPEA…EKCT, YPEA…NTCI, NSQTNPPQLCHSAGSCDFDTGVCSCNPTNSGPTCE, VPNSCVTASLIICSNRGTCTDGVCKCNEGYSGALCE, and IDGE…KHCN. 15 disulfides stabilise this stretch: C68-C82, C76-C92, C110-C123, C117-C134, C136-C145, C271-C284, C278-C293, C295-C306, C362-C375, C377-C386, C457-C471, C478-C487, C550-C565, C555-C576, and C578-C587. Residue N552 is glycosylated (N-linked (GlcNAc...) asparagine).

The protein belongs to the NOTCH family. As to quaternary structure, interacts with EB1.

It is found in the cell projection. The protein localises to the cilium. The protein resides in the flagellum. Its subcellular location is the cytoplasm. It localises to the cytoskeleton. It is found in the flagellum axoneme. The sequence is that of Neurogenic locus notch homolog protein from Giardia intestinalis (strain ATCC 50803 / WB clone C6) (Giardia lamblia).